Here is a 285-residue protein sequence, read N- to C-terminus: Small ribosomal subunit protein uS2 (285 aa).

The segment at 229-285 is disordered; sequence RHNGKSNAAEEPMAEWERELLEQHEEQKSQDAAPAEQSAPAAEAPAETEQKDAPAAE. Over residues 243-257 the composition is skewed to basic and acidic residues; that stretch reads EWERELLEQHEEQKS. A compositionally biased stretch (low complexity) spans 260–275; the sequence is AAPAEQSAPAAEAPAE. The span at 276-285 shows a compositional bias: basic and acidic residues; that stretch reads TEQKDAPAAE.

The protein belongs to the universal ribosomal protein uS2 family.

The protein is Small ribosomal subunit protein uS2 of Kocuria rhizophila (strain ATCC 9341 / DSM 348 / NBRC 103217 / DC2201).